We begin with the raw amino-acid sequence, 251 residues long: Diphthine synthase (251 aa).

S-adenosyl-L-methionine is bound by residues Leu-9, Asp-84, Val-87, 112 to 113 (SI), Leu-160, Ala-194, and His-219.

Belongs to the diphthine synthase family. In terms of assembly, homodimer.

The enzyme catalyses 2-[(3S)-amino-3-carboxypropyl]-L-histidyl-[translation elongation factor 2] + 3 S-adenosyl-L-methionine = diphthine-[translation elongation factor 2] + 3 S-adenosyl-L-homocysteine + 3 H(+). Its pathway is protein modification; peptidyl-diphthamide biosynthesis. S-adenosyl-L-methionine-dependent methyltransferase that catalyzes the trimethylation of the amino group of the modified target histidine residue in translation elongation factor 2 (EF-2), to form an intermediate called diphthine. The three successive methylation reactions represent the second step of diphthamide biosynthesis. The polypeptide is Diphthine synthase (Archaeoglobus fulgidus (strain ATCC 49558 / DSM 4304 / JCM 9628 / NBRC 100126 / VC-16)).